We begin with the raw amino-acid sequence, 204 residues long: HAUS augmin-like complex subunit 2 (204 aa).

The stretch at 54–84 (LAQKCHTLQSMNNHLEAVLKEKRSLRQRLLK) forms a coiled coil.

It belongs to the HAUS2 family. In terms of assembly, component of the HAUS augmin-like complex. The complex interacts with the gamma-tubulin ring complex and this interaction is required for spindle assembly. Interacts with EML3 (phosphorylated form).

It is found in the cytoplasm. Its subcellular location is the cytoskeleton. The protein localises to the microtubule organizing center. It localises to the centrosome. The protein resides in the spindle. This Pongo abelii (Sumatran orangutan) protein is HAUS augmin-like complex subunit 2 (HAUS2).